The chain runs to 250 residues: Proteasome subunit alpha type-4-A (250 aa).

Residues Lys-40 and Lys-64 each participate in a glycyl lysine isopeptide (Lys-Gly) (interchain with G-Cter in ubiquitin) cross-link.

The protein belongs to the peptidase T1A family. Component of the 20S core complex of the 26S proteasome. The 26S proteasome is composed of a core protease (CP), known as the 20S proteasome, capped at one or both ends by the 19S regulatory particle (RP/PA700). The 20S proteasome core is composed of 28 subunits that are arranged in four stacked rings, resulting in a barrel-shaped structure. The two end rings are each formed by seven alpha subunits, and the two central rings are each formed by seven beta subunits. The catalytic chamber with the active sites is on the inside of the barrel. Ubiquitous low levels, higher expression in siliques and flowers.

It localises to the cytoplasm. It is found in the nucleus. Functionally, the proteasome is a multicatalytic proteinase complex which is characterized by its ability to cleave peptides with Arg, Phe, Tyr, Leu, and Glu adjacent to the leaving group at neutral or slightly basic pH. The proteasome has an ATP-dependent proteolytic activity. This chain is Proteasome subunit alpha type-4-A (PAC1), found in Arabidopsis thaliana (Mouse-ear cress).